Here is a 400-residue protein sequence, read N- to C-terminus: CinA-like protein (400 aa).

Belongs to the CinA family.

The chain is CinA-like protein from Escherichia coli (strain 55989 / EAEC).